Consider the following 254-residue polypeptide: uncharacterized protein (254 aa).

Residues Ile18, Ser37, Asp63, Asn90, Tyr159, Lys163, Val192, and Thr194 each contribute to the NADP(+) site. Tyr159 (proton donor) is an active-site residue. The active-site Lowers pKa of active site Tyr is Lys163.

This sequence belongs to the short-chain dehydrogenases/reductases (SDR) family.

It is found in the cytoplasm. The protein localises to the nucleus. This is an uncharacterized protein from Schizosaccharomyces pombe (strain 972 / ATCC 24843) (Fission yeast).